Reading from the N-terminus, the 368-residue chain is Quinolinate synthase (368 aa).

Iminosuccinate contacts are provided by histidine 46 and serine 63. Cysteine 110 is a binding site for [4Fe-4S] cluster. Iminosuccinate-binding positions include 141–143 (YVN) and serine 162. Cysteine 230 is a binding site for [4Fe-4S] cluster. Iminosuccinate-binding positions include 256–258 (HPE) and threonine 273. [4Fe-4S] cluster is bound at residue cysteine 320.

It belongs to the quinolinate synthase family. Type 3 subfamily. Requires [4Fe-4S] cluster as cofactor.

The protein resides in the cytoplasm. It carries out the reaction iminosuccinate + dihydroxyacetone phosphate = quinolinate + phosphate + 2 H2O + H(+). The protein operates within cofactor biosynthesis; NAD(+) biosynthesis; quinolinate from iminoaspartate: step 1/1. In terms of biological role, catalyzes the condensation of iminoaspartate with dihydroxyacetone phosphate to form quinolinate. In Bacillus cytotoxicus (strain DSM 22905 / CIP 110041 / 391-98 / NVH 391-98), this protein is Quinolinate synthase.